The chain runs to 328 residues: Gonadotropin-releasing hormone receptor (328 aa).

Topologically, residues Met-1 to Arg-38 are extracellular. A glycan (N-linked (GlcNAc...) asparagine) is linked at Asn-18. A helical transmembrane segment spans residues Val-39–Lys-59. Topologically, residues Leu-60–Thr-84 are cytoplasmic. A helical membrane pass occupies residues Leu-85–Val-105. Topologically, residues Gln-106–Lys-115 are extracellular. Cys-114 and Cys-196 are oxidised to a cystine. The helical transmembrane segment at Ile-116–Ser-136 threads the bilayer. The Cytoplasmic portion of the chain corresponds to Leu-137–Thr-160. Residues Gly-161 to Ile-181 form a helical membrane-spanning segment. Topologically, residues His-182–Gln-208 are extracellular. Residues Ala-209–Ile-229 form a helical membrane-spanning segment. At Cys-230 to Ala-271 the chain is on the cytoplasmic side. The helical transmembrane segment at Phe-272–Phe-292 threads the bilayer. Residues Asp-293 to His-306 lie on the Extracellular side of the membrane. A helical membrane pass occupies residues Phe-307–Ser-327. A topological domain (cytoplasmic) is located at residue Leu-328.

It belongs to the G-protein coupled receptor 1 family.

It is found in the cell membrane. Receptor for gonadotropin releasing hormone (GnRH) that mediates the action of GnRH to stimulate the secretion of the gonadotropic hormones luteinizing hormone (LH) and follicle-stimulating hormone (FSH). This receptor mediates its action by association with G-proteins that activate a phosphatidylinositol-calcium second messenger system. This Cavia porcellus (Guinea pig) protein is Gonadotropin-releasing hormone receptor (GNRHR).